The chain runs to 354 residues: Probable trehalose-phosphate phosphatase E (354 aa).

It belongs to the trehalose phosphatase family. A divalent metal cation serves as cofactor.

It catalyses the reaction alpha,alpha-trehalose 6-phosphate + H2O = alpha,alpha-trehalose + phosphate. Its pathway is glycan biosynthesis; trehalose biosynthesis. Removes the phosphate from trehalose 6-phosphate to produce free trehalose. Trehalose accumulation in plant may improve abiotic stress tolerance. This is Probable trehalose-phosphate phosphatase E (TPPE) from Arabidopsis thaliana (Mouse-ear cress).